A 340-amino-acid chain; its full sequence is Phosphoribosylformylglycinamidine cyclo-ligase (340 aa).

Belongs to the AIR synthase family.

The protein localises to the cytoplasm. It carries out the reaction 2-formamido-N(1)-(5-O-phospho-beta-D-ribosyl)acetamidine + ATP = 5-amino-1-(5-phospho-beta-D-ribosyl)imidazole + ADP + phosphate + H(+). It participates in purine metabolism; IMP biosynthesis via de novo pathway; 5-amino-1-(5-phospho-D-ribosyl)imidazole from N(2)-formyl-N(1)-(5-phospho-D-ribosyl)glycinamide: step 2/2. This chain is Phosphoribosylformylglycinamidine cyclo-ligase, found in Streptococcus pneumoniae (strain CGSP14).